Here is a 316-residue protein sequence, read N- to C-terminus: Pyridoxal 5'-phosphate synthase subunit PdxS (316 aa).

Residue Asp44 participates in D-ribose 5-phosphate binding. Lys101 acts as the Schiff-base intermediate with D-ribose 5-phosphate in catalysis. Residue Gly173 coordinates D-ribose 5-phosphate. Residue Lys185 participates in D-glyceraldehyde 3-phosphate binding. Residues Gly234 and 255–256 (GS) contribute to the D-ribose 5-phosphate site.

The protein belongs to the PdxS/SNZ family. In the presence of PdxT, forms a dodecamer of heterodimers.

The enzyme catalyses aldehydo-D-ribose 5-phosphate + D-glyceraldehyde 3-phosphate + L-glutamine = pyridoxal 5'-phosphate + L-glutamate + phosphate + 3 H2O + H(+). It participates in cofactor biosynthesis; pyridoxal 5'-phosphate biosynthesis. Functionally, catalyzes the formation of pyridoxal 5'-phosphate from ribose 5-phosphate (RBP), glyceraldehyde 3-phosphate (G3P) and ammonia. The ammonia is provided by the PdxT subunit. Can also use ribulose 5-phosphate and dihydroxyacetone phosphate as substrates, resulting from enzyme-catalyzed isomerization of RBP and G3P, respectively. The protein is Pyridoxal 5'-phosphate synthase subunit PdxS of Sulfurisphaera tokodaii (strain DSM 16993 / JCM 10545 / NBRC 100140 / 7) (Sulfolobus tokodaii).